The primary structure comprises 629 residues: Arginine--tRNA ligase (629 aa).

A 'HIGH' region motif is present at residues 128–138; the sequence is VNPTKPLHMGH.

The protein belongs to the class-I aminoacyl-tRNA synthetase family.

Its subcellular location is the cytoplasm. It carries out the reaction tRNA(Arg) + L-arginine + ATP = L-arginyl-tRNA(Arg) + AMP + diphosphate. This chain is Arginine--tRNA ligase, found in Pyrococcus furiosus (strain ATCC 43587 / DSM 3638 / JCM 8422 / Vc1).